A 171-amino-acid polypeptide reads, in one-letter code: NADH-quinone oxidoreductase subunit I 1 (171 aa).

4Fe-4S ferredoxin-type domains are found at residues 41–71 and 81–110; these read LSRDPDGEERCVACYLCAAACPVDCIALQAT and EFFRINFSRCIFCGFCEEACPTDAIQLTPD. 8 residues coordinate [4Fe-4S] cluster: Cys-51, Cys-54, Cys-57, Cys-61, Cys-90, Cys-93, Cys-96, and Cys-100.

The protein belongs to the complex I 23 kDa subunit family. As to quaternary structure, NDH-1 is composed of 14 different subunits. Subunits NuoA, H, J, K, L, M, N constitute the membrane sector of the complex. [4Fe-4S] cluster is required as a cofactor.

It localises to the cell inner membrane. It carries out the reaction a quinone + NADH + 5 H(+)(in) = a quinol + NAD(+) + 4 H(+)(out). Functionally, NDH-1 shuttles electrons from NADH, via FMN and iron-sulfur (Fe-S) centers, to quinones in the respiratory chain. The immediate electron acceptor for the enzyme in this species is believed to be ubiquinone. Couples the redox reaction to proton translocation (for every two electrons transferred, four hydrogen ions are translocated across the cytoplasmic membrane), and thus conserves the redox energy in a proton gradient. This chain is NADH-quinone oxidoreductase subunit I 1, found in Nitrosospira multiformis (strain ATCC 25196 / NCIMB 11849 / C 71).